The primary structure comprises 276 residues: Ribosomal RNA small subunit methyltransferase A (276 aa).

The S-adenosyl-L-methionine site is built by N27, L29, G54, E75, D101, and N123.

Belongs to the class I-like SAM-binding methyltransferase superfamily. rRNA adenine N(6)-methyltransferase family. RsmA subfamily.

Its subcellular location is the cytoplasm. It catalyses the reaction adenosine(1518)/adenosine(1519) in 16S rRNA + 4 S-adenosyl-L-methionine = N(6)-dimethyladenosine(1518)/N(6)-dimethyladenosine(1519) in 16S rRNA + 4 S-adenosyl-L-homocysteine + 4 H(+). In terms of biological role, specifically dimethylates two adjacent adenosines (A1518 and A1519) in the loop of a conserved hairpin near the 3'-end of 16S rRNA in the 30S particle. May play a critical role in biogenesis of 30S subunits. The polypeptide is Ribosomal RNA small subunit methyltransferase A (Bartonella quintana (strain Toulouse) (Rochalimaea quintana)).